The primary structure comprises 224 residues: UPF0173 metal-dependent hydrolase EF_1371 (224 aa).

Belongs to the UPF0173 family.

This chain is UPF0173 metal-dependent hydrolase EF_1371, found in Enterococcus faecalis (strain ATCC 700802 / V583).